We begin with the raw amino-acid sequence, 176 residues long: Adenine phosphoribosyltransferase (176 aa).

It belongs to the purine/pyrimidine phosphoribosyltransferase family. In terms of assembly, homodimer.

The protein resides in the cytoplasm. The enzyme catalyses AMP + diphosphate = 5-phospho-alpha-D-ribose 1-diphosphate + adenine. The protein operates within purine metabolism; AMP biosynthesis via salvage pathway; AMP from adenine: step 1/1. Its function is as follows. Catalyzes a salvage reaction resulting in the formation of AMP, that is energically less costly than de novo synthesis. This is Adenine phosphoribosyltransferase from Borrelia garinii subsp. bavariensis (strain ATCC BAA-2496 / DSM 23469 / PBi) (Borreliella bavariensis).